The following is a 300-amino-acid chain: Probable endonuclease 4 (300 aa).

Positions 69, 110, 145, 179, 182, 214, 227, 229, and 259 each coordinate Zn(2+).

It belongs to the AP endonuclease 2 family. Requires Zn(2+) as cofactor.

It carries out the reaction Endonucleolytic cleavage to 5'-phosphooligonucleotide end-products.. In terms of biological role, endonuclease IV plays a role in DNA repair. It cleaves phosphodiester bonds at apurinic or apyrimidinic (AP) sites, generating a 3'-hydroxyl group and a 5'-terminal sugar phosphate. The chain is Probable endonuclease 4 from Lachnoclostridium phytofermentans (strain ATCC 700394 / DSM 18823 / ISDg) (Clostridium phytofermentans).